A 147-amino-acid polypeptide reads, in one-letter code: D-aminoacyl-tRNA deacylase (147 aa).

Residues 139–140 carry the Gly-cisPro motif, important for rejection of L-amino acids motif; the sequence is GP.

Belongs to the DTD family. Homodimer.

It is found in the cytoplasm. The catalysed reaction is glycyl-tRNA(Ala) + H2O = tRNA(Ala) + glycine + H(+). It catalyses the reaction a D-aminoacyl-tRNA + H2O = a tRNA + a D-alpha-amino acid + H(+). In terms of biological role, an aminoacyl-tRNA editing enzyme that deacylates mischarged D-aminoacyl-tRNAs. Also deacylates mischarged glycyl-tRNA(Ala), protecting cells against glycine mischarging by AlaRS. Acts via tRNA-based rather than protein-based catalysis; rejects L-amino acids rather than detecting D-amino acids in the active site. By recycling D-aminoacyl-tRNA to D-amino acids and free tRNA molecules, this enzyme counteracts the toxicity associated with the formation of D-aminoacyl-tRNA entities in vivo and helps enforce protein L-homochirality. The sequence is that of D-aminoacyl-tRNA deacylase from Rippkaea orientalis (strain PCC 8801 / RF-1) (Cyanothece sp. (strain PCC 8801)).